A 251-amino-acid chain; its full sequence is Imidazole glycerol phosphate synthase subunit HisF (251 aa).

Active-site residues include Asp11 and Asp130.

It belongs to the HisA/HisF family. As to quaternary structure, heterodimer of HisH and HisF.

The protein localises to the cytoplasm. The enzyme catalyses 5-[(5-phospho-1-deoxy-D-ribulos-1-ylimino)methylamino]-1-(5-phospho-beta-D-ribosyl)imidazole-4-carboxamide + L-glutamine = D-erythro-1-(imidazol-4-yl)glycerol 3-phosphate + 5-amino-1-(5-phospho-beta-D-ribosyl)imidazole-4-carboxamide + L-glutamate + H(+). Its pathway is amino-acid biosynthesis; L-histidine biosynthesis; L-histidine from 5-phospho-alpha-D-ribose 1-diphosphate: step 5/9. Its function is as follows. IGPS catalyzes the conversion of PRFAR and glutamine to IGP, AICAR and glutamate. The HisF subunit catalyzes the cyclization activity that produces IGP and AICAR from PRFAR using the ammonia provided by the HisH subunit. This chain is Imidazole glycerol phosphate synthase subunit HisF, found in Cytophaga hutchinsonii (strain ATCC 33406 / DSM 1761 / CIP 103989 / NBRC 15051 / NCIMB 9469 / D465).